Consider the following 288-residue polypeptide: NADPH-dependent aldehyde reductase 1, chloroplastic (288 aa).

Over residues 1 to 18 (MASEKQKQHAQPGKEHVM) the composition is skewed to basic and acidic residues. The interval 1-32 (MASEKQKQHAQPGKEHVMESSPQFSSSDYQPS) is disordered. Polar residues predominate over residues 20 to 32 (SSPQFSSSDYQPS). Position 47 to 71 (47 to 71 (SGIGRAVGYCFASEGATVAFTYVKG)) interacts with NADP(+). Position 179 (Ser179) interacts with substrate. Tyr192 functions as the Proton acceptor in the catalytic mechanism.

It belongs to the short-chain dehydrogenases/reductases (SDR) family.

The protein resides in the plastid. Its subcellular location is the chloroplast. Functionally, aldehyde reductase that catalyzes the reduction of the aldehyde carbonyl groups on saturated and alpha,beta-unsaturated aldehydes with more than 5 carbons. No activity on alpha,beta-unsaturated ketones. Can use propionaldehyde, butyraldehyde, methylglyoxal, (e)-2-pentenal, (E)-2-hexenal, (Z)-3-hexenal and (E)-2-nonenal as substrates, but not propenal (acrolein), crotonaldehyde, 2-butanone, 3-buten-2-one or 1-penten-3-one. May act as a short alcohol-polyol-sugar dehydrogenase possibly related to carbohydrate metabolism and the acquisition of desiccation tolerance. May also be involved in signal transduction. The protein is NADPH-dependent aldehyde reductase 1, chloroplastic of Arabidopsis thaliana (Mouse-ear cress).